Reading from the N-terminus, the 465-residue chain is Cysteine--tRNA ligase (465 aa).

Cys27 is a binding site for Zn(2+). A 'HIGH' region motif is present at residues 29-39 (PTVYNFFHIGN). 3 residues coordinate Zn(2+): Cys207, His232, and Glu236. Positions 264 to 268 (KMSKS) match the 'KMSKS' region motif. Position 267 (Lys267) interacts with ATP.

It belongs to the class-I aminoacyl-tRNA synthetase family. As to quaternary structure, monomer. Zn(2+) is required as a cofactor.

The protein localises to the cytoplasm. The catalysed reaction is tRNA(Cys) + L-cysteine + ATP = L-cysteinyl-tRNA(Cys) + AMP + diphosphate. The protein is Cysteine--tRNA ligase of Clostridium botulinum (strain Kyoto / Type A2).